The primary structure comprises 594 residues: Glomulin (594 aa).

At A2 the chain carries N-acetylalanine. An alpha-helical region with structural similarity to HEAT repeats region spans residues 2-553 (AVEELQSIIK…EEIPNMPPEM (552 aa)). An important for interaction with RBX1 region spans residues 300–594 (IDQLPMVLSP…STSEENIGIK (295 aa)).

In terms of assembly, interacts with FKBP4 and FKBP1A. Isoform 1: Interacts with RBX1 (via RING domain). Identified in complexes that contain RBX1 plus one of the cullins CUL1, CUL2, CUL3, and CUL4A. Identified in a SCF complex composed of CUL1, RBX1, SKP1, FBXW7 and GLMN. Component of a SCF-like complex consisting of CUL7, RBX1, SKP1, FBXW8 and GLMN. Interacts with unphosphorylated MET and is released upon MET phosphorylation. In terms of processing, phosphorylated on tyrosine residues. Ubiquitous.

In terms of biological role, regulatory component of cullin-RING-based SCF (SKP1-Cullin-F-box protein) E3 ubiquitin-protein ligase complexes. Inhibits E3 ubiquitin ligase activity by binding to RBX1 (via RING domain) and inhibiting its interaction with the E2 ubiquitin-conjugating enzyme CDC34. Inhibits RBX1-mediated neddylation of CUL1. Required for normal stability and normal cellular levels of key components of SCF ubiquitin ligase complexes, including FBXW7, RBX1, CUL1, CUL2, CUL3, CUL4A, and thereby contributes to the regulation of CCNE1 and MYC levels. Essential for normal development of the vasculature. Contributes to the regulation of RPS6KB1 phosphorylation. The chain is Glomulin (GLMN) from Homo sapiens (Human).